A 93-amino-acid polypeptide reads, in one-letter code: Phosphoribosyl-ATP pyrophosphatase (93 aa).

Belongs to the PRA-PH family.

The protein resides in the cytoplasm. It catalyses the reaction 1-(5-phospho-beta-D-ribosyl)-ATP + H2O = 1-(5-phospho-beta-D-ribosyl)-5'-AMP + diphosphate + H(+). Its pathway is amino-acid biosynthesis; L-histidine biosynthesis; L-histidine from 5-phospho-alpha-D-ribose 1-diphosphate: step 2/9. The sequence is that of Phosphoribosyl-ATP pyrophosphatase from Mycolicibacterium paratuberculosis (strain ATCC BAA-968 / K-10) (Mycobacterium paratuberculosis).